We begin with the raw amino-acid sequence, 463 residues long: 6-phosphofructo-2-kinase/fructose-2,6-bisphosphatase 3 (463 aa).

The 6-phosphofructo-2-kinase stretch occupies residues methionine 1–glutamine 246. Glycine 42–tyrosine 50 provides a ligand contact to ATP. Residues arginine 75 and arginine 99 each contribute to the beta-D-fructose 6-phosphate site. Aspartate 125 is a catalytic residue. 2 residues coordinate beta-D-fructose 6-phosphate: threonine 127 and arginine 133. The active site involves cysteine 155. Residue asparagine 164–lysine 169 participates in ATP binding. The beta-D-fructose 6-phosphate site is built by lysine 169, arginine 191, and tyrosine 195. Residues proline 247 to histidine 463 form a fructose-2,6-bisphosphatase region. Arginine 254 lines the beta-D-fructose 2,6-bisphosphate pocket. The Tele-phosphohistidine intermediate role is filled by histidine 255. Positions 261 and 267 each coordinate beta-D-fructose 2,6-bisphosphate. Glutamate 324 acts as the Proton donor/acceptor in catalysis. Tyrosine 335 contributes to the beta-D-fructose 2,6-bisphosphate binding site. Tyrosine 346–alanine 349 lines the ATP pocket. Positions 353, 364, and 390 each coordinate beta-D-fructose 2,6-bisphosphate. Residues glutamine 390 to valine 394 and tyrosine 426 contribute to the ATP site. The tract at residues arginine 444–histidine 463 is disordered. Serine 462 is subject to Phosphoserine; by AMPK and PKA.

This sequence in the C-terminal section; belongs to the phosphoglycerate mutase family. In terms of assembly, homodimer. Forms a heterodimer with PFKFB2. Post-translationally, phosphorylation by AMPK stimulates activity. Brain.

The enzyme catalyses beta-D-fructose 2,6-bisphosphate + H2O = beta-D-fructose 6-phosphate + phosphate. It catalyses the reaction beta-D-fructose 6-phosphate + ATP = beta-D-fructose 2,6-bisphosphate + ADP + H(+). Its function is as follows. Catalyzes both the synthesis and degradation of fructose 2,6-bisphosphate. This chain is 6-phosphofructo-2-kinase/fructose-2,6-bisphosphatase 3 (PFKFB3), found in Bos taurus (Bovine).